Consider the following 370-residue polypeptide: Gibberellin 3-beta-dioxygenase 2-2 (370 aa).

One can recognise a Fe2OG dioxygenase domain in the interval 205–306 (MTATMHLNWY…RISLGYFLGP (102 aa)). Residues His-229, Asp-231, and His-287 each contribute to the Fe cation site. Arg-297 is a catalytic residue.

The protein belongs to the iron/ascorbate-dependent oxidoreductase family. GA3OX subfamily. Requires L-ascorbate as cofactor. It depends on Fe cation as a cofactor.

The catalysed reaction is gibberellin A20 + 2-oxoglutarate + O2 = gibberellin A1 + succinate + CO2. Converts the inactive gibberellin precursors GA9 and GA20 in the bioactives gibberellins GA4 and GA1. This Triticum aestivum (Wheat) protein is Gibberellin 3-beta-dioxygenase 2-2 (GA3ox2-2).